Consider the following 318-residue polypeptide: Thioredoxin reductase (318 aa).

36-43 serves as a coordination point for FAD; that stretch reads TGLQQGGQ. A disulfide bridge connects residues cysteine 136 and cysteine 139. An FAD-binding site is contributed by 286 to 295; sequence DVMDHNYRQA.

It belongs to the class-II pyridine nucleotide-disulfide oxidoreductase family. In terms of assembly, homodimer. FAD serves as cofactor.

It is found in the cytoplasm. It carries out the reaction [thioredoxin]-dithiol + NADP(+) = [thioredoxin]-disulfide + NADPH + H(+). This chain is Thioredoxin reductase (trxB), found in Haemophilus influenzae (strain ATCC 51907 / DSM 11121 / KW20 / Rd).